Consider the following 36-residue polypeptide: Glucagon (36 aa).

Belongs to the glucagon family. In terms of tissue distribution, produced by the X-cells of the islets of pancreas.

The protein resides in the secreted. Its function is as follows. Promotes hydrolysis of glycogen and lipids, and raises the blood sugar level. This Hydrolagus colliei (Spotted ratfish) protein is Glucagon (gcg).